A 545-amino-acid chain; its full sequence is uncharacterized protein (545 aa).

The span at Met1–Arg10 shows a compositional bias: basic residues. Residues Met1 to Pro25 are disordered. WD repeat units follow at residues Ala417 to Met456 and Gly460 to Ser501.

This is an uncharacterized protein from Caenorhabditis elegans.